The sequence spans 491 residues: Carboxypeptidase SOL1 (491 aa).

A signal peptide spans 1-25 (MSKLRFFQSLLISTVICFFLPSINA). Over 26 to 452 (RGGHSDHIHP…LLTQFFTETN (427 aa)) the chain is Extracellular. Residue Asn39 is glycosylated (N-linked (GlcNAc...) asparagine). The 275-residue stretch at 64–338 (GYMTNDDLEK…KSMLNLVASL (275 aa)) folds into the Peptidase M14 domain. Residues His125 and Glu128 each coordinate Zn(2+). Substrate contacts are provided by residues 125-128 (HGDE) and 186-187 (NR). His226 contacts Zn(2+). Asn268 carries N-linked (GlcNAc...) asparagine glycosylation. Residue Tyr286 coordinates substrate. The active-site Proton donor/acceptor is the Glu308. Residues 453–470 (NGITLTLFVVVVFLCFLL) traverse the membrane as a helical segment. Over 471–491 (QRRVRFNLWKQRQSSRRSITV) the chain is Cytoplasmic.

The protein belongs to the peptidase M14 family. It depends on Zn(2+) as a cofactor. In terms of tissue distribution, expressed in roots, shoots, leaves, flowers and siliques.

The protein localises to the endosome membrane. Possesses in vitro carboxypeptidase activity against the C-terminal arginine and lysine residues. Involved in the maturation of CLE19. Removes the C-terminal arginine residue of CLE19 proprotein. The cleavage of the C-terminal arginine residue is necessary for CLE19 activity in vivo. Is not involved in generating active CLV3. Is not involved in CLE19 or CLV3 perception. This Arabidopsis thaliana (Mouse-ear cress) protein is Carboxypeptidase SOL1.